Here is a 212-residue protein sequence, read N- to C-terminus: Regulatory protein RecX (212 aa).

The protein belongs to the RecX family.

The protein resides in the cytoplasm. Functionally, modulates RecA activity. The polypeptide is Regulatory protein RecX (Clostridium botulinum (strain Eklund 17B / Type B)).